The following is a 157-amino-acid chain: Probable succinate transporter subunit YjjB (157 aa).

Helical transmembrane passes span 8 to 28 (LALAQDMILAAIPAVGFAMVF), 50 to 70 (MILMTSGLNIEWSTFMASMLV), 87 to 107 (VFTVAAVIPMFPGISAYTAMI), and 129 to 149 (FLTASSIVGALSIGLSIPGLW).

This sequence belongs to the ThrE exporter (TC 2.A.79) family. The transporter is composed of YjjB and YjjP.

It localises to the cell inner membrane. Involved in succinate export with YjjP. Both proteins are required for export. This Shigella flexneri serotype 5b (strain 8401) protein is Probable succinate transporter subunit YjjB.